We begin with the raw amino-acid sequence, 271 residues long: Non-homologous end joining protein Ku (271 aa).

The Ku domain maps to 12–194; sequence KLSLVTCPVV…DQKPVPELLS (183 aa). Positions 225–249 are disordered; sequence EAKKTPPAKKTKAEEKTGKGSAESN.

The protein belongs to the prokaryotic Ku family. Homodimer. Interacts with LigD.

With LigD forms a non-homologous end joining (NHEJ) DNA repair enzyme, which repairs dsDNA breaks with reduced fidelity. Binds linear dsDNA with 5'- and 3'- overhangs but not closed circular dsDNA nor ssDNA. Recruits and stimulates the ligase activity of LigD. The protein is Non-homologous end joining protein Ku of Methylocella silvestris (strain DSM 15510 / CIP 108128 / LMG 27833 / NCIMB 13906 / BL2).